Reading from the N-terminus, the 160-residue chain is uncharacterized protein (160 aa).

Its subcellular location is the mitochondrion. This is an uncharacterized protein from Arabidopsis thaliana (Mouse-ear cress).